The chain runs to 133 residues: IgW chain C region, secreted form 2 (133 aa).

The Ig-like domain maps to 1-71 (VISGFYPDSV…TGSRFNDRIS (71 aa)). Residues N32 and N112 are each glycosylated (N-linked (GlcNAc...) asparagine). The segment at 76-133 (KGGTVNLPVPGGNTPCTCPPSSCSGCMPKLVYQTDLNVTLENGGQLQYNCHQQACKIK) is secretory tail.

In terms of tissue distribution, expressed mainly in lymphoid tissues including spleen, epigonal organ and circulating lymphocytes.

It localises to the secreted. The chain is IgW chain C region, secreted form 2 from Heterodontus francisci (Horn shark).